Reading from the N-terminus, the 438-residue chain is Exoglucanase 3 (438 aa).

An N-terminal signal peptide occupies residues 1–20 (MFKFAALLALASLVPGFVQA). A CBM1 domain is found at 21-59 (QSPVWGQCGGNGWTGPTTCASGSTCVKQNDFYSQCLPNN). Cystine bridges form between C28–C45 and C39–C55. The segment at 57 to 90 (PNNQAPPSTTTQPGTTPPATTTSGGTGPTSGAGN) is disordered. The linker stretch occupies residues 60–87 (QAPPSTTTQPGTTPPATTTSGGTGPTSG). The span at 61–79 (APPSTTTQPGTTPPATTTS) shows a compositional bias: low complexity. The tract at residues 88–438 (AGNPYTGKTV…TLVANANPAL (351 aa)) is catalytic. 2 disulfide bridges follow: C170-C229 and C360-C407. D215 functions as the Proton donor in the catalytic mechanism. The active-site Nucleophile is D393.

It belongs to the glycosyl hydrolase 6 (cellulase B) family.

The catalysed reaction is Hydrolysis of (1-&gt;4)-beta-D-glucosidic linkages in cellulose and cellotetraose, releasing cellobiose from the non-reducing ends of the chains.. Functionally, shows enzymatic activity towards crystalline cellulose. At long reaction times. It is also able to degrade carboxymethyl cellulose and barley B-glucan. In Agaricus bisporus (White button mushroom), this protein is Exoglucanase 3 (cel3).